The following is a 167-amino-acid chain: Ribosome maturation factor RimM (167 aa).

The region spanning Asp-94–Phe-166 is the PRC barrel domain.

This sequence belongs to the RimM family. Binds ribosomal protein uS19.

It is found in the cytoplasm. Its function is as follows. An accessory protein needed during the final step in the assembly of 30S ribosomal subunit, possibly for assembly of the head region. Essential for efficient processing of 16S rRNA. May be needed both before and after RbfA during the maturation of 16S rRNA. It has affinity for free ribosomal 30S subunits but not for 70S ribosomes. This chain is Ribosome maturation factor RimM, found in Chlorobium luteolum (strain DSM 273 / BCRC 81028 / 2530) (Pelodictyon luteolum).